A 1027-amino-acid polypeptide reads, in one-letter code: C2 and GRAM domain-containing protein At5g50170 (1027 aa).

The C2 1 domain maps to 1 to 103 (MRLYVYILQA…ENQTLLPTWF (103 aa)). Over residues 158 to 167 (SPKDLISSRD) the composition is skewed to basic and acidic residues. Disordered stretches follow at residues 158–177 (SPKDLISSRDGKRRKHHDGK) and 201–223 (LHDESSVGQSVNSNYEDATDQCS). Over residues 168–177 (GKRRKHHDGK) the composition is skewed to basic residues. Polar residues predominate over residues 206-223 (SVGQSVNSNYEDATDQCS). Positions 253–426 (TGGVLVDQKY…LLAKTYKTLD (174 aa)) constitute a VASt 1 domain. The helical transmembrane segment at 452-472 (FLYFWSSSVICAVLLSVYVVV) threads the bilayer. In terms of domain architecture, C2 2 spans 516–639 (TVHFVQARLH…TADELADLSV (124 aa)). In terms of domain architecture, GRAM spans 693 to 756 (AFQKLFGLPH…LWEDIDDIQV (64 aa)). Residues 855 to 1018 (MMSKVYTCDL…VIFDLFQKES (164 aa)) enclose the VASt 2 domain.

It localises to the membrane. In Arabidopsis thaliana (Mouse-ear cress), this protein is C2 and GRAM domain-containing protein At5g50170.